Here is a 177-residue protein sequence, read N- to C-terminus: Anditomin synthesis protein L (177 aa).

2 helical membrane-spanning segments follow: residues 54–74 and 117–137; these read VVNS…PFIM and IVNF…YMVF. Asn165 is a glycosylation site (N-linked (GlcNAc...) asparagine).

The protein localises to the membrane. The protein operates within secondary metabolite biosynthesis; terpenoid biosynthesis. Its function is as follows. Part of the gene cluster that mediates the biosynthesis of anditomin, a fungal meroterpenoid. The first step of the pathway is the synthesis of 3,5-dimethylorsellinic acid (DMOA) by the polyketide synthase andM. DMOA is then converted to the phthalide compound 5,7-dihydroxy-4,6-dimethylphthalide (DHDMP) by the cytochrome P450 monooxygenase andK, which is further prenylated by the prenyltransferase andD to yield farnesyl-DHDMP. Further epoxidation by the FAD-dependent monooxygenase andE leads to epoxyfarnesyl-DHDMP. The next step involves the terpene cyclase andB that converts epoxyfarnesyl-DHDMP into preandiloid A through opening of the epoxide ring followed by the cyclization of the farnesyl moiety. Preandiloid A is in turn oxidized at the C-3 hydroxyl group to yield preandiloid B by the dehydrogenase andC. The dioxygenase andA is solely responsible for the dehydrogenation of preandiloid B leading to the enone preandiloid C, as well as for the intriguing structural rearrangement to generate the bicyclo[2.2.2]octane core, transforming preandiloid C into andiconin. FAD-binding monooxygenase andJ then produces andilesin D which is reduced by dehydrogenase andI to yield andilesin A. Action of acetyltransferase andG followed by a spontaneous acetate elimination leads then to andilesin B, which is in turn substrate of the short chain dehydrogenase andH to yield andilesin C. Finally, the dioxygenase andF catalyzes the transformation of andilesin C to anditomin. The exact role of andL within the anditomin biosynthetic pathway has not been identified yet. This is Anditomin synthesis protein L from Emericella variicolor (Aspergillus stellatus).